The following is a 284-amino-acid chain: Bifunctional protein FolD (284 aa).

NADP(+)-binding positions include 165–167 (GRG), threonine 192, and valine 233.

This sequence belongs to the tetrahydrofolate dehydrogenase/cyclohydrolase family. In terms of assembly, homodimer.

The catalysed reaction is (6R)-5,10-methylene-5,6,7,8-tetrahydrofolate + NADP(+) = (6R)-5,10-methenyltetrahydrofolate + NADPH. The enzyme catalyses (6R)-5,10-methenyltetrahydrofolate + H2O = (6R)-10-formyltetrahydrofolate + H(+). Its pathway is one-carbon metabolism; tetrahydrofolate interconversion. In terms of biological role, catalyzes the oxidation of 5,10-methylenetetrahydrofolate to 5,10-methenyltetrahydrofolate and then the hydrolysis of 5,10-methenyltetrahydrofolate to 10-formyltetrahydrofolate. This is Bifunctional protein FolD from Corynebacterium glutamicum (strain R).